We begin with the raw amino-acid sequence, 169 residues long: Putative pre-16S rRNA nuclease (169 aa).

Positions 1–19 (MTDSDHRLPDRPGEGDPGR) are enriched in basic and acidic residues. The segment at 1–24 (MTDSDHRLPDRPGEGDPGRGRRIG) is disordered.

Belongs to the YqgF nuclease family.

Its subcellular location is the cytoplasm. Its function is as follows. Could be a nuclease involved in processing of the 5'-end of pre-16S rRNA. In Mycobacterium sp. (strain KMS), this protein is Putative pre-16S rRNA nuclease.